We begin with the raw amino-acid sequence, 325 residues long: Pyruvate dehydrogenase E1 component subunit beta (325 aa).

Position 60 (glutamate 60) interacts with thiamine diphosphate.

As to quaternary structure, heterodimer of an alpha and a beta chain. Thiamine diphosphate serves as cofactor.

It carries out the reaction N(6)-[(R)-lipoyl]-L-lysyl-[protein] + pyruvate + H(+) = N(6)-[(R)-S(8)-acetyldihydrolipoyl]-L-lysyl-[protein] + CO2. The pyruvate dehydrogenase complex catalyzes the overall conversion of pyruvate to acetyl-CoA and CO(2). It contains multiple copies of three enzymatic components: pyruvate dehydrogenase (E1), dihydrolipoamide acetyltransferase (E2) and lipoamide dehydrogenase (E3). This Geobacillus stearothermophilus (Bacillus stearothermophilus) protein is Pyruvate dehydrogenase E1 component subunit beta (pdhB).